Here is a 253-residue protein sequence, read N- to C-terminus: 3-deoxy-manno-octulosonate cytidylyltransferase (253 aa).

Belongs to the KdsB family.

The protein resides in the cytoplasm. The enzyme catalyses 3-deoxy-alpha-D-manno-oct-2-ulosonate + CTP = CMP-3-deoxy-beta-D-manno-octulosonate + diphosphate. The protein operates within nucleotide-sugar biosynthesis; CMP-3-deoxy-D-manno-octulosonate biosynthesis; CMP-3-deoxy-D-manno-octulosonate from 3-deoxy-D-manno-octulosonate and CTP: step 1/1. It functions in the pathway bacterial outer membrane biogenesis; lipopolysaccharide biosynthesis. Activates KDO (a required 8-carbon sugar) for incorporation into bacterial lipopolysaccharide in Gram-negative bacteria. The sequence is that of 3-deoxy-manno-octulosonate cytidylyltransferase from Idiomarina loihiensis (strain ATCC BAA-735 / DSM 15497 / L2-TR).